Here is a 175-residue protein sequence, read N- to C-terminus: MSSSPAARRELSYSWGYLFFDEPPLSVEKAWRLVQSSRFGKTLILVGDVVSKSFRERGLGDFFIVDGHTRRNLKVEDLPGKAEAFTCKNRPGEISRECYELLRNLLTSAIGRGKKIVVYVEGEEDLLSLVALLYCPLNDSWVIYGNFRGYLEVIPCTSFFRSVAENLLVKHFEKD.

GTP contacts are provided by D48, V49, V50, D66, and E124.

It belongs to the GTP-dependent DPCK family.

It carries out the reaction 3'-dephospho-CoA + GTP = GDP + CoA + H(+). The protein operates within cofactor biosynthesis; coenzyme A biosynthesis. Its function is as follows. Catalyzes the GTP-dependent phosphorylation of the 3'-hydroxyl group of dephosphocoenzyme A to form coenzyme A (CoA). The chain is GTP-dependent dephospho-CoA kinase from Thermofilum pendens (strain DSM 2475 / Hrk 5).